The chain runs to 539 residues: Glycerophosphoinositol inositolphosphodiesterase GDPD2 (539 aa).

Over 1–40 (MADSPGCCSIWARCLHCLYSCHWRKYPKQKMQTSKCDCIW) the chain is Cytoplasmic. The helical transmembrane segment at 41-61 (FGLLFLTFLLSLGWLYIGLIL) threads the bilayer. Over 62–83 (LNDLHNFNEFLFRHWGHWMDWS) the chain is Extracellular. A helical membrane pass occupies residues 84 to 104 (LIVLLVVSLLVTYASLLLLLG). Residues 105-121 (LLLQLCGQPLHLHSLHK) are Cytoplasmic-facing. The helical transmembrane segment at 122–142 (VLLLLIVLLVAAGLVGLDIQW) threads the bilayer. The Extracellular segment spans residues 143–154 (RQEWHSLRLSLQ). The chain crosses the membrane as a helical span at residues 155–175 (ATAPFLHIGAVAGITLLAWPV). The Cytoplasmic portion of the chain corresponds to 176 to 189 (ADTFYRIHPRGPKV). The chain crosses the membrane as a helical span at residues 190-210 (LLLLLFFGVTLVIYLMPLLFI). The Extracellular segment spans residues 211–491 (SSPCIMKLRD…PLWLLPPQKY (281 aa)). The 256-residue stretch at 225 to 480 (PGLVGHRGAP…NACQLLQQMQ (256 aa)) folds into the GP-PDE domain. A divalent metal cation is bound by residues glutamate 257, aspartate 259, and histidine 272. Asparagine 333 carries N-linked (GlcNAc...) asparagine glycosylation. Residues 492 to 512 (LMIWVITDCASILLLLSIFLL) traverse the membrane as a helical segment. At 513-539 (RGGCAKRNRTGLETAVLLTKINNFASE) the chain is on the cytoplasmic side.

The protein belongs to the glycerophosphoryl diester phosphodiesterase family. Ca(2+) serves as cofactor. As to expression, detected in spleen, femur and calvaria.

The protein localises to the cell membrane. It is found in the cytoplasm. Its subcellular location is the cytoskeleton. The enzyme catalyses sn-glycero-3-phospho-1D-myo-inositol + H2O = 1D-myo-inositol 1-phosphate + glycerol + H(+). In terms of biological role, has glycerophosphoinositol inositolphosphodiesterase activity and specifically hydrolyzes glycerophosphoinositol, with no activity for other substrates such as glycerophosphoinositol 4-phosphate, glycerophosphocholine, glycerophosphoethanolamine, and glycerophosphoserine. Accelerates the program of osteoblast differentiation and growth. May play a role in remodeling of the actin cytoskeleton. This Mus musculus (Mouse) protein is Glycerophosphoinositol inositolphosphodiesterase GDPD2 (Gdpd2).